Reading from the N-terminus, the 2410-residue chain is Genome polyprotein 1 (2410 aa).

Residues 1–21 (MEQTLAQAVSRRNKTDTPMAE) form a disordered region. Residues 474-632 (AMADANNCWS…AARKYPLHVE (159 aa)) enclose the Helicase ATP-binding domain. Residue 487 to 494 (GHTGSGKS) participates in ATP binding. Residues 583–586 (DEAH) carry the DEAH box motif. Positions 647-813 (GGGDLLDISK…NVPFYMNETF (167 aa)) constitute a Helicase C-terminal domain. Position 1234 is an O-(5'-phospho-RNA)-tyrosine (Tyr-1234). A Peptidase C4 domain is found at 1359–1573 (ITLEASTGIL…CGYASHTALF (215 aa)). Residues His-1404, Asp-1440, and Cys-1507 each act as for nuclear inclusion protein A activity in the active site. Residues 1857–1980 (WLHGSGDGSR…AISPQFDEEF (124 aa)) enclose the RdRp catalytic domain. Residues 2175-2200 (MPTEDDGKLKTPSGARIPSSAADGNW) form a disordered region.

It belongs to the bymoviruses polyprotein 1 family. In terms of processing, VPg is uridylylated by the polymerase and is covalently attached to the 5'-end of the genomic RNA. This uridylylated form acts as a nucleotide-peptide primer for the polymerase. Post-translationally, the viral RNA1 of bymoviruses is expressed as a single polyprotein which undergoes post-translational proteolytic processing by the main proteinase NIa-pro resulting in the production of at least eight individual proteins.

It is found in the host cytoplasmic vesicle. The protein resides in the virion. It catalyses the reaction RNA(n) + a ribonucleoside 5'-triphosphate = RNA(n+1) + diphosphate. It carries out the reaction Hydrolyzes glutaminyl bonds, and activity is further restricted by preferences for the amino acids in P6 - P1' that vary with the species of potyvirus, e.g. Glu-Xaa-Xaa-Tyr-Xaa-Gln-|-(Ser or Gly) for the enzyme from tobacco etch virus. The natural substrate is the viral polyprotein, but other proteins and oligopeptides containing the appropriate consensus sequence are also cleaved.. Functionally, indispensable for virus replication. Mediates the cap-independent, EIF4E-dependent translation of viral genomic RNAs. Binds to the cap-binding site of host EIF4E and thus interferes with the host EIF4E-dependent mRNA export and translation. VPg-RNA directly binds EIF4E and is a template for transcription. Also forms trimeric complexes with EIF4E-EIF4G, which are templates for translation. Its function is as follows. Has RNA-binding and proteolytic activities. In terms of biological role, an RNA-dependent RNA polymerase that plays an essential role in the virus replication. This Hordeum vulgare (Barley) protein is Genome polyprotein 1.